The primary structure comprises 129 residues: MGKEATRVRRRERKNIASGIAHVNSSFNNTTITITDAQGNTIAWSSAGTMGFKGSRKSTPYAAQVAAEDVSKKAQEHGMRTLEVEVAGPGSGRESALRALQAAGFTVTSIRDVTTIPHNGCRPRKRRRV.

Belongs to the universal ribosomal protein uS11 family. As to quaternary structure, part of the 30S ribosomal subunit. Interacts with proteins S7 and S18. Binds to IF-3.

In terms of biological role, located on the platform of the 30S subunit, it bridges several disparate RNA helices of the 16S rRNA. Forms part of the Shine-Dalgarno cleft in the 70S ribosome. The polypeptide is Small ribosomal subunit protein uS11 (Rhodopseudomonas palustris (strain BisB18)).